An 843-amino-acid chain; its full sequence is F-box only protein 11 (843 aa).

Residues 1–63 are disordered; the sequence is MVAEESGPGA…RVSGKSQDLS (63 aa). Polar residues predominate over residues 30–45; sequence PTKNSMEGASTSTTEN. Positions 69-115 constitute an F-box domain; it reads QYLQEKLPDEVVLKIFSYLLEQDLCRAACVCKRFSELANDPILWKRL. 19 PbH1 repeats span residues 311 to 333, 334 to 356, 357 to 379, 380 to 402, 403 to 425, 426 to 448, 449 to 471, 472 to 494, 495 to 517, 518 to 540, 541 to 563, 564 to 586, 587 to 609, 610 to 632, 633 to 655, 656 to 678, 679 to 701, 702 to 724, and 725 to 746; these read GACP…YITD, HAQG…WVKN, HGNP…FTFD, HGMG…EVKA, YANP…YVHE, KGRG…WITS, NSDP…YIFG, DGRG…QIRT, NSCP…YVHE, KGQG…WVTT, GSTP…YFYD, NGHG…QIRT, GSNP…LVYN, SGLG…WIKT, DSNP…CIFN, GGRG…LIST, NSHP…EITN, HATA…FLAS, and GVNV…EKAV. Residues 749–820 form a UBR-type zinc finger; it reads GQCLYKISSY…LSNPCTLAGE (72 aa).

As to quaternary structure, component of the SCF(FBXO11) complex consisting of CUL1, RBX1, SKP1 and FBXO11. Interacts with CIITA.

Its subcellular location is the nucleus. The protein resides in the chromosome. It participates in protein modification; protein ubiquitination. In terms of biological role, substrate recognition component of a SCF (SKP1-CUL1-F-box protein) E3 ubiquitin-protein ligase complex which mediates the ubiquitination and subsequent proteasomal degradation of target proteins, such as DTL/CDT2, BCL6, SNAI1 and PRDM1/BLIMP1. The SCF(FBXO11) complex mediates ubiquitination and degradation of BCL6, thereby playing a role in the germinal center B-cells terminal differentiation toward memory B-cells and plasma cells. The SCF(FBXO11) complex also mediates ubiquitination and degradation of DTL, an important step for the regulation of TGF-beta signaling, cell migration and the timing of the cell-cycle progression and exit. The SCF(FBXO11) complex also catalyzes ubiquitination and degradation of GSK3B-phosphorylated SNAI1. Binds to and neddylates phosphorylated p53/TP53, inhibiting its transcriptional activity. Plays a role in the regulatiom of erythropoiesis but not myelopoiesis or megakaryopoiesis. Mechanistically, activates erythroid genes by mediating the degradation of BAHD1, a heterochromatin-associated protein that recruits corepressors to H3K27me3 marks. Participates in macrophage cell death and inflammation in response to bacterial toxins by regulating the expression of complement 5a receptor 1/C5AR1 and IL-1beta. Acts as a critical regulator to determine the level of MHC-II by mediating the recognition of degron at the P/S/T domain of CIITA leading to its ubiquitination and subsequent degradation via the proteasome. Participates in the antiviral repsonse by initiating the activation of TBK1-IRF3-IFN-I axis. Mediates the 'Lys-63'-linked ubiquitination of TRAF3 to strengthen the interaction between TRAF3 and TBK1. This chain is F-box only protein 11 (Fbxo11), found in Rattus norvegicus (Rat).